A 1576-amino-acid polypeptide reads, in one-letter code: Pentafunctional AROM polypeptide (1576 aa).

Residues Met-1–Asp-387 are 3-dehydroquinate synthase. NAD(+)-binding positions include Asp-49–Asn-51, Glu-86–Lys-89, Gly-117–Val-119, and Asp-122. Position 133 (Arg-133) interacts with 7-phospho-2-dehydro-3-deoxy-D-arabino-heptonate. Thr-142–Thr-143 contacts NAD(+). 2 residues coordinate 7-phospho-2-dehydro-3-deoxy-D-arabino-heptonate: Asp-149 and Lys-155. Lys-164 provides a ligand contact to NAD(+). Position 165 (Asn-165) interacts with 7-phospho-2-dehydro-3-deoxy-D-arabino-heptonate. NAD(+)-binding positions include Phe-182–Thr-185 and Asn-193. Glu-197 serves as a coordination point for Zn(2+). 7-phospho-2-dehydro-3-deoxy-D-arabino-heptonate is bound by residues Glu-197 to Lys-200 and Lys-253. Glu-263 serves as the catalytic Proton acceptor; for 3-dehydroquinate synthase activity. Residues Arg-267–Asn-271 and His-274 each bind 7-phospho-2-dehydro-3-deoxy-D-arabino-heptonate. His-274 contacts Zn(2+). The active-site Proton acceptor; for 3-dehydroquinate synthase activity is His-278. 7-phospho-2-dehydro-3-deoxy-D-arabino-heptonate contacts are provided by His-290 and Lys-359. His-290 is a Zn(2+) binding site. An EPSP synthase region spans residues Val-400 to Val-841. Catalysis depends on Cys-823, which acts as the For EPSP synthase activity. Residues Asp-863 to Ser-1055 are shikimate kinase. An ATP-binding site is contributed by Gly-870–Thr-877. Residues Leu-1056–Glu-1276 form a 3-dehydroquinase region. The active-site Proton acceptor; for 3-dehydroquinate dehydratase activity is the His-1179. The active-site Schiff-base intermediate with substrate; for 3-dehydroquinate dehydratase activity is the Lys-1207. Positions Pro-1289–Ala-1576 are shikimate dehydrogenase.

It in the N-terminal section; belongs to the sugar phosphate cyclases superfamily. Dehydroquinate synthase family. The protein in the 2nd section; belongs to the EPSP synthase family. In the 3rd section; belongs to the shikimate kinase family. This sequence in the 4th section; belongs to the type-I 3-dehydroquinase family. It in the C-terminal section; belongs to the shikimate dehydrogenase family. In terms of assembly, homodimer. Zn(2+) is required as a cofactor.

It is found in the cytoplasm. It carries out the reaction 7-phospho-2-dehydro-3-deoxy-D-arabino-heptonate = 3-dehydroquinate + phosphate. It catalyses the reaction 3-dehydroquinate = 3-dehydroshikimate + H2O. The catalysed reaction is shikimate + NADP(+) = 3-dehydroshikimate + NADPH + H(+). The enzyme catalyses shikimate + ATP = 3-phosphoshikimate + ADP + H(+). It carries out the reaction 3-phosphoshikimate + phosphoenolpyruvate = 5-O-(1-carboxyvinyl)-3-phosphoshikimate + phosphate. Its pathway is metabolic intermediate biosynthesis; chorismate biosynthesis; chorismate from D-erythrose 4-phosphate and phosphoenolpyruvate: step 2/7. It functions in the pathway metabolic intermediate biosynthesis; chorismate biosynthesis; chorismate from D-erythrose 4-phosphate and phosphoenolpyruvate: step 3/7. The protein operates within metabolic intermediate biosynthesis; chorismate biosynthesis; chorismate from D-erythrose 4-phosphate and phosphoenolpyruvate: step 4/7. It participates in metabolic intermediate biosynthesis; chorismate biosynthesis; chorismate from D-erythrose 4-phosphate and phosphoenolpyruvate: step 5/7. Its pathway is metabolic intermediate biosynthesis; chorismate biosynthesis; chorismate from D-erythrose 4-phosphate and phosphoenolpyruvate: step 6/7. Its function is as follows. The AROM polypeptide catalyzes 5 consecutive enzymatic reactions in prechorismate polyaromatic amino acid biosynthesis. The chain is Pentafunctional AROM polypeptide from Sclerotinia sclerotiorum (strain ATCC 18683 / 1980 / Ss-1) (White mold).